A 353-amino-acid chain; its full sequence is Sesquiterpene synthase Agr8 (353 aa).

Mg(2+) is bound by residues D82, N220, S224, and E228. The DDXXD motif motif lies at D82–D86. (2E,6E)-farnesyl diphosphate contacts are provided by R309 and Y310.

The protein belongs to the terpene synthase family. The cofactor is Mg(2+).

It carries out the reaction (2E,6E)-farnesyl diphosphate = gamma-muurolene + diphosphate. The catalysed reaction is (2E,6E)-farnesyl diphosphate = alpha-selinene + diphosphate. It catalyses the reaction (2E,6E)-farnesyl diphosphate = delta-cadinene + diphosphate. Its function is as follows. Terpene cyclase that catalyzes the cyclization of farnesyl diphosphate (FPP) to various sesquiterpenes, including beta-elemene, gamma-muurolene, alpha-selinene, beta-selinene, beta-cadinene, delta-cadinene and alpha-cadinol. In Cyclocybe aegerita (Black poplar mushroom), this protein is Sesquiterpene synthase Agr8.